Here is a 371-residue protein sequence, read N- to C-terminus: Cyanide hydratase (371 aa).

In terms of domain architecture, CN hydrolase spans 6-285 (YKAAAVTSEP…DGLLYVDIDL (280 aa)). Glutamate 46 functions as the Proton acceptor in the catalytic mechanism. The active site involves lysine 128. Cysteine 163 (nucleophile) is an active-site residue. Residues 339-353 (GLNRPLDPPKDERHG) show a composition bias toward basic and acidic residues. Positions 339–371 (GLNRPLDPPKDERHGIVGVAGQKSAEQRKAGDL) are disordered.

Belongs to the carbon-nitrogen hydrolase superfamily. Nitrilase family. As to quaternary structure, oligomer of dimers, forming left-handed helical fibers.

The enzyme catalyses formamide = hydrogen cyanide + H2O. In terms of biological role, catalyzes the hydration of cyanide to formamide. Degradation of cyanide may be important for plant pathogenic fungi in infection of cyanogenic plants. Also acts on 2-cyanopyridine, fumaronitrile and benzonitrile, albeit at a lower rate. This is Cyanide hydratase (nit) from Stereum hirsutum (strain FP-91666) (White-rot fungus).